The following is a 65-amino-acid chain: Sulfur carrier protein TtuB (65 aa).

G65 carries the post-translational modification 1-thioglycine; alternate. A Glycyl adenylate; alternate modification is found at G65. A Glycyl cysteine thioester (Gly-Cys) (interchain with C-192 in TtuC); alternate cross-link involves residue G65. G65 is covalently cross-linked (Glycyl lysine isopeptide (Gly-Lys) (interchain with K-? in acceptor proteins); alternate).

This sequence belongs to the TtuB family. In terms of assembly, is able to form a heterocomplex with TtuA. In terms of processing, the C-terminal glycine residue of TtuB is first activated by TtuC as an acyl-adenylate (TtuB-COAMP), and then converted to the thiocarboxylate form (TtuB-COSH) by the cysteine desulfurases IscS or SufS.

It participates in tRNA modification. Its function is as follows. Required for the 2-thiolation of 5-methyluridine residue at position 54 in the T loop of tRNAs, leading to 5-methyl-2-thiouridine (m(5)s(2)U or s(2)T). This modification allows thermal stabilization of tRNAs in thermophilic microorganisms, and is essential for cell growth at high temperatures. Thiocarboxylated TtuB functions as the sulfur donor in the sulfurtransferase reaction catalyzed by TtuA. TtuB also functions as a protein modifier covalently attached to lysine residues of the target proteins TtuA and TtuC. TtuB conjugation might play a regulatory role to ensure appropriate sulfur transfer in cells. In Thermus thermophilus (strain ATCC BAA-163 / DSM 7039 / HB27), this protein is Sulfur carrier protein TtuB.